Consider the following 96-residue polypeptide: Cytochrome c2 iso-2 (96 aa).

Cysteine 10, cysteine 13, histidine 14, and methionine 75 together coordinate heme c.

Belongs to the cytochrome c family. In terms of processing, binds 1 heme c group covalently per subunit.

Cytochrome c2 is found mainly in purple, non-sulfur, photosynthetic bacteria where it functions as the electron donor to the oxidized bacteriochlorophyll in the photophosphorylation pathway. However, it may also have a role in the respiratory chain and is found in some non-photosynthetic bacteria. The protein is Cytochrome c2 iso-2 of Magnetospirillum fulvum (Rhodospirillum fulvum).